Here is a 419-residue protein sequence, read N- to C-terminus: UDP-N-acetylglucosamine 1-carboxyvinyltransferase (419 aa).

A phosphoenolpyruvate-binding site is contributed by 22 to 23 (KN). Position 93 (Arg-93) interacts with UDP-N-acetyl-alpha-D-glucosamine. The Proton donor role is filled by Cys-117. At Cys-117 the chain carries 2-(S-cysteinyl)pyruvic acid O-phosphothioketal. UDP-N-acetyl-alpha-D-glucosamine contacts are provided by Asp-307 and Ile-329.

This sequence belongs to the EPSP synthase family. MurA subfamily.

It localises to the cytoplasm. It carries out the reaction phosphoenolpyruvate + UDP-N-acetyl-alpha-D-glucosamine = UDP-N-acetyl-3-O-(1-carboxyvinyl)-alpha-D-glucosamine + phosphate. Its pathway is cell wall biogenesis; peptidoglycan biosynthesis. Its function is as follows. Cell wall formation. Adds enolpyruvyl to UDP-N-acetylglucosamine. The sequence is that of UDP-N-acetylglucosamine 1-carboxyvinyltransferase from Shewanella woodyi (strain ATCC 51908 / MS32).